We begin with the raw amino-acid sequence, 833 residues long: Leucine--tRNA ligase (833 aa).

The 'HIGH' region signature appears at 41 to 52; the sequence is PYPSGAGLHVGH. A 'KMSKS' region motif is present at residues 610–614; that stretch reads KMSKS. K613 lines the ATP pocket.

It belongs to the class-I aminoacyl-tRNA synthetase family.

Its subcellular location is the cytoplasm. It carries out the reaction tRNA(Leu) + L-leucine + ATP = L-leucyl-tRNA(Leu) + AMP + diphosphate. The protein is Leucine--tRNA ligase of Streptococcus pyogenes serotype M2 (strain MGAS10270).